Here is a 503-residue protein sequence, read N- to C-terminus: Glycerol kinase (503 aa).

Threonine 14 contributes to the ADP binding site. Residues threonine 14, threonine 15, and serine 16 each contribute to the ATP site. Threonine 14 serves as a coordination point for sn-glycerol 3-phosphate. Arginine 18 is an ADP binding site. Sn-glycerol 3-phosphate-binding residues include arginine 84, glutamate 85, tyrosine 136, and aspartate 246. Arginine 84, glutamate 85, tyrosine 136, aspartate 246, and glutamine 247 together coordinate glycerol. Positions 268 and 311 each coordinate ADP. Positions 268, 311, 315, and 412 each coordinate ATP. Positions 412 and 416 each coordinate ADP.

This sequence belongs to the FGGY kinase family.

The enzyme catalyses glycerol + ATP = sn-glycerol 3-phosphate + ADP + H(+). It participates in polyol metabolism; glycerol degradation via glycerol kinase pathway; sn-glycerol 3-phosphate from glycerol: step 1/1. With respect to regulation, inhibited by fructose 1,6-bisphosphate (FBP). In terms of biological role, key enzyme in the regulation of glycerol uptake and metabolism. Catalyzes the phosphorylation of glycerol to yield sn-glycerol 3-phosphate. The chain is Glycerol kinase from Haemophilus influenzae (strain PittGG).